We begin with the raw amino-acid sequence, 135 residues long: Interleukin-4 (135 aa).

Positions 1-24 (MGLTSQLIPALVCLLVCTSHFVHG) are cleaved as a signal peptide. Intrachain disulfides connect Cys27-Cys135, Cys48-Cys85, and Cys70-Cys105. N-linked (GlcNAc...) asparagine glycosylation is found at Asn62 and Asn96.

It belongs to the IL-4/IL-13 family.

The protein localises to the secreted. In terms of biological role, participates in at least several B-cell activation processes as well as of other cell types. It is a costimulator of DNA-synthesis. It induces the expression of class II MHC molecules on resting B-cells. It enhances both secretion and cell surface expression of IgE and IgG1. It also regulates the expression of the low affinity Fc receptor for IgE (CD23) on both lymphocytes and monocytes. Positively regulates IL31RA expression in macrophages. Stimulates autophagy in dendritic cells by interfering with mTORC1 signaling and through the induction of RUFY4. In Capra hircus (Goat), this protein is Interleukin-4 (IL4).